The primary structure comprises 446 residues: tRNA-2-methylthio-N(6)-dimethylallyladenosine synthase (446 aa).

Residues 3-124 (KKLYIKTYGC…LPELISKVVR (122 aa)) enclose the MTTase N-terminal domain. Residues Cys-12, Cys-48, Cys-87, Cys-162, Cys-166, and Cys-169 each coordinate [4Fe-4S] cluster. A Radical SAM core domain is found at 148–380 (YPQGASSFIS…QKELAAQQLA (233 aa)). A TRAM domain is found at 383 to 446 (ESCIGSTMKV…LNSLSGEIYR (64 aa)).

The protein belongs to the methylthiotransferase family. MiaB subfamily. In terms of assembly, monomer. [4Fe-4S] cluster serves as cofactor.

It is found in the cytoplasm. The enzyme catalyses N(6)-dimethylallyladenosine(37) in tRNA + (sulfur carrier)-SH + AH2 + 2 S-adenosyl-L-methionine = 2-methylsulfanyl-N(6)-dimethylallyladenosine(37) in tRNA + (sulfur carrier)-H + 5'-deoxyadenosine + L-methionine + A + S-adenosyl-L-homocysteine + 2 H(+). Its function is as follows. Catalyzes the methylthiolation of N6-(dimethylallyl)adenosine (i(6)A), leading to the formation of 2-methylthio-N6-(dimethylallyl)adenosine (ms(2)i(6)A) at position 37 in tRNAs that read codons beginning with uridine. The sequence is that of tRNA-2-methylthio-N(6)-dimethylallyladenosine synthase from Rickettsia bellii (strain OSU 85-389).